Reading from the N-terminus, the 117-residue chain is Large ribosomal subunit protein uL18 (117 aa).

Belongs to the universal ribosomal protein uL18 family. As to quaternary structure, part of the 50S ribosomal subunit; part of the 5S rRNA/L5/L18/L25 subcomplex. Contacts the 5S and 23S rRNAs.

This is one of the proteins that bind and probably mediate the attachment of the 5S RNA into the large ribosomal subunit, where it forms part of the central protuberance. The chain is Large ribosomal subunit protein uL18 from Pseudoalteromonas atlantica (strain T6c / ATCC BAA-1087).